The primary structure comprises 597 residues: Centrosomal protein of 70 kDa (597 aa).

The interval 1–23 (MFPVAPKPQDSSQASDRLMTEKQ) is disordered. Coiled coils occupy residues 66-179 (MRQN…QMEV) and 254-326 (TYKG…KKAE). One copy of the TPR repeat lies at 483-516 (NGVYPRMNEVYTRLGEMNNAVRNLQELLELDSSS).

In terms of assembly, directly interacts with tubulin-gamma; this interaction determines centrosomal localization.

The protein resides in the cytoplasm. The protein localises to the cytoskeleton. It is found in the microtubule organizing center. Its subcellular location is the centrosome. Functionally, plays a role in the organization of both preexisting and nascent microtubules in interphase cells. During mitosis, required for the organization and orientation of the mitotic spindle. The chain is Centrosomal protein of 70 kDa (CEP70) from Pongo abelii (Sumatran orangutan).